A 509-amino-acid chain; its full sequence is Scavenger receptor class B member 1 (509 aa).

At 1–11 the chain is on the cytoplasmic side; the sequence is MGGSSRARWVA. The helical transmembrane segment at 12–32 threads the bilayer; it reads LGLGALGLLFAALGVVMILMV. At 33–440 the chain is on the extracellular side; sequence PSLIKQQVLK…YTQLVLMPQV (408 aa). N-linked (GlcNAc...) asparagine glycans are attached at residues asparagine 102, asparagine 108, asparagine 116, asparagine 173, asparagine 212, asparagine 227, asparagine 255, asparagine 288, asparagine 310, asparagine 330, and asparagine 383. Residues cysteine 251 and cysteine 384 are joined by a disulfide bond. A helical membrane pass occupies residues 441–461; the sequence is LHYAQYVLLGLGGLLLLVPII. Cysteine 462 carries the S-palmitoyl cysteine lipid modification. The Cytoplasmic segment spans residues 462-509; sequence CQLRSQEKCFLFWSGSKKGSQDKEAIQAYSESLMSPAAKGTVLQEAKL.

It belongs to the CD36 family. As to quaternary structure, the C-terminal region binds to PDZK1. Post-translationally, N-glycosylated. In terms of processing, the six cysteines of the extracellular domain are all involved in intramolecular disulfide bonds. In terms of tissue distribution, expressed primarily in liver, ovary and adrenal gland, and, at lower levels in other non-placental steroidogenic tissues, including adipose tissue, mammary gland and testis (at protein level). Isoform 2 is expressed at lower levels than isoform 1 in liver, testis and adrenal gland. At the mRNA, but not at the protein level, isoform 2 is the predominant isoform in testis (80%).

It localises to the cell membrane. The protein localises to the membrane. Its subcellular location is the caveola. Functionally, receptor for different ligands such as phospholipids, cholesterol ester, lipoproteins, phosphatidylserine and apoptotic cells. Both isoform 1 and isoform 2 act as receptors for HDL, mediating selective uptake of cholesteryl ether and HDL-dependent cholesterol efflux. Also facilitates the flux of free and esterified cholesterol between the cell surface and apoB-containing lipoproteins and modified lipoproteins, although less efficiently than HDL. May be involved in the phagocytosis of apoptotic cells, via its phosphatidylserine binding activity. This chain is Scavenger receptor class B member 1 (Scarb1), found in Mus musculus (Mouse).